A 237-amino-acid chain; its full sequence is 7-cyano-7-deazaguanine synthase (237 aa).

Phenylalanine 14 to leucine 24 serves as a coordination point for ATP. Zn(2+)-binding residues include cysteine 202, cysteine 217, cysteine 220, and cysteine 223.

The protein belongs to the QueC family. Zn(2+) serves as cofactor.

The catalysed reaction is 7-carboxy-7-deazaguanine + NH4(+) + ATP = 7-cyano-7-deazaguanine + ADP + phosphate + H2O + H(+). The protein operates within purine metabolism; 7-cyano-7-deazaguanine biosynthesis. Functionally, catalyzes the ATP-dependent conversion of 7-carboxy-7-deazaguanine (CDG) to 7-cyano-7-deazaguanine (preQ(0)). The sequence is that of 7-cyano-7-deazaguanine synthase from Rhodopseudomonas palustris (strain ATCC BAA-98 / CGA009).